A 317-amino-acid chain; its full sequence is L-lactate dehydrogenase (317 aa).

Residues Val-16, Asp-37, and Tyr-68 each contribute to the NAD(+) site. Residues Gln-85, Arg-91, 123-126 (NPCD), and 151-154 (DSAR) each bind substrate. 121 to 123 (ASN) serves as a coordination point for NAD(+). The Proton acceptor role is filled by His-178. Phosphotyrosine is present on Tyr-222. Thr-231 serves as a coordination point for substrate.

It belongs to the LDH/MDH superfamily. LDH family. In terms of assembly, homotetramer.

Its subcellular location is the cytoplasm. It catalyses the reaction (S)-lactate + NAD(+) = pyruvate + NADH + H(+). Its pathway is fermentation; pyruvate fermentation to lactate; (S)-lactate from pyruvate: step 1/1. In terms of biological role, catalyzes the conversion of lactate to pyruvate. The protein is L-lactate dehydrogenase of Mesoplasma florum (strain ATCC 33453 / NBRC 100688 / NCTC 11704 / L1) (Acholeplasma florum).